The sequence spans 290 residues: Protein MGF 110-9L (290 aa).

A signal peptide spans 1–19 (MKVIVLLLVLAVMQPVIQS). The stretch at 1 to 160 (MKVIVLLLVL…QYSRMRMQAA (160 aa)) is one A repeat. The next 2 membrane-spanning stretches (helical) occupy residues 128 to 148 (VENI…IGYV) and 163 to 183 (LLIF…IIMN). One copy of the B repeat lies at 161–290 (TRLLIFLGLY…KRHVINQDDL (130 aa)).

It belongs to the asfivirus MGF 110 family.

The protein localises to the membrane. This is Protein MGF 110-9L from Ornithodoros (relapsing fever ticks).